We begin with the raw amino-acid sequence, 450 residues long: Ornithine decarboxylase (450 aa).

Lys59 bears the N6-(pyridoxal phosphate)lysine mark. Pyridoxal 5'-phosphate contacts are provided by residues Ser190, Gly227, and 264-267 (EPGR). A Phosphoserine; by CK2 modification is found at Ser293. 321-322 (YD) lines the substrate pocket. Cys350 serves as the catalytic Proton donor; shared with dimeric partner. Residue Asp351 participates in substrate binding. Residue Tyr379 coordinates pyridoxal 5'-phosphate.

Belongs to the Orn/Lys/Arg decarboxylase class-II family. In terms of assembly, homodimer. Only the dimer is catalytically active, as the active sites are constructed of residues from both monomers. Pyridoxal 5'-phosphate serves as cofactor.

It carries out the reaction L-ornithine + H(+) = putrescine + CO2. It functions in the pathway amine and polyamine biosynthesis; putrescine biosynthesis via L-ornithine pathway; putrescine from L-ornithine: step 1/1. With respect to regulation, inhibited by antizymes (AZs) in response to polyamine levels. AZs inhibit the assembly of the functional homodimer by binding to ODC monomers and targeting them for ubiquitin-independent proteolytic destruction by the 26S proteasome. In terms of biological role, catalyzes the first and rate-limiting step of polyamine biosynthesis that converts ornithine into putrescine, which is the precursor for the polyamines, spermidine and spermine. Polyamines are essential for cell proliferation and are implicated in cellular processes, ranging from DNA replication to apoptosis. In Gallus gallus (Chicken), this protein is Ornithine decarboxylase (ODC1).